Consider the following 105-residue polypeptide: Large ribosomal subunit protein bL21 (105 aa).

This sequence belongs to the bacterial ribosomal protein bL21 family. As to quaternary structure, part of the 50S ribosomal subunit. Contacts protein L20.

Its function is as follows. This protein binds to 23S rRNA in the presence of protein L20. The sequence is that of Large ribosomal subunit protein bL21 from Porphyromonas gingivalis (strain ATCC BAA-308 / W83).